The chain runs to 244 residues: tRNA (guanine-N(7)-)-methyltransferase (244 aa).

The span at 1–10 (MSDTPQSPAQ) shows a compositional bias: polar residues. The interval 1–20 (MSDTPQSPAQDSLAEHDEAR) is disordered. Positions 74, 99, 126, and 149 each coordinate S-adenosyl-L-methionine. The active site involves Asp149. Residues Lys153, Asp185, and 222-225 (TKFE) contribute to the substrate site.

The protein belongs to the class I-like SAM-binding methyltransferase superfamily. TrmB family.

It catalyses the reaction guanosine(46) in tRNA + S-adenosyl-L-methionine = N(7)-methylguanosine(46) in tRNA + S-adenosyl-L-homocysteine. It participates in tRNA modification; N(7)-methylguanine-tRNA biosynthesis. In terms of biological role, catalyzes the formation of N(7)-methylguanine at position 46 (m7G46) in tRNA. This Pseudomonas aeruginosa (strain ATCC 15692 / DSM 22644 / CIP 104116 / JCM 14847 / LMG 12228 / 1C / PRS 101 / PAO1) protein is tRNA (guanine-N(7)-)-methyltransferase.